The sequence spans 386 residues: Probable serine/threonine-protein kinase PBL23 (386 aa).

C5 carries S-palmitoyl cysteine lipidation. Positions 82 to 360 (FNPDNQLGEG…SDVVTALEYL (279 aa)) constitute a Protein kinase domain. ATP is bound by residues 88-96 (LGEGGFGRV) and K111. D210 (proton acceptor) is an active-site residue. Residues 365–386 (TEEDGQTVEGEEEEEEDERSKL) form a disordered region. Positions 368–386 (DGQTVEGEEEEEEDERSKL) are enriched in acidic residues.

The protein belongs to the protein kinase superfamily. Ser/Thr protein kinase family.

The protein localises to the cell membrane. It carries out the reaction L-seryl-[protein] + ATP = O-phospho-L-seryl-[protein] + ADP + H(+). It catalyses the reaction L-threonyl-[protein] + ATP = O-phospho-L-threonyl-[protein] + ADP + H(+). May be involved in plant defense signaling. This chain is Probable serine/threonine-protein kinase PBL23, found in Arabidopsis thaliana (Mouse-ear cress).